Here is a 315-residue protein sequence, read N- to C-terminus: Outer membrane protease IcsP (315 aa).

Positions 1–20 (MKLKFFVLALCVPAIFTTHA) are cleaved as a signal peptide. Catalysis depends on residues Asp-103, Asp-105, Asp-230, and His-232.

Belongs to the peptidase A26 family.

Its subcellular location is the cell outer membrane. Protease responsible for the cleavage of IcsA between 'Arg-758' and 'Arg-759', removing the entire alpha domain from IscA localized on the bacterial surface. This proteolytic activity contributes to the maintenance of a tight polar cap of IcsA, which is important to Shigella actin-based motility. This Shigella flexneri protein is Outer membrane protease IcsP (icsP).